The primary structure comprises 176 residues: Disulfide bond formation protein B (176 aa).

Residues 1 to 13 (MQFLNTFSKSRIS) lie on the Cytoplasmic side of the membrane. Residues 14 to 30 (WLLLLLCIVFFEGSALF) form a helical membrane-spanning segment. Topologically, residues 31–48 (FQHGMKLGPCVMCIYERV) are periplasmic. The cysteines at positions 40 and 43 are disulfide-linked. The chain crosses the membrane as a helical span at residues 49 to 64 (AMMGIAFAALLGAIAP). The Cytoplasmic portion of the chain corresponds to 65–71 (QYAIIRW). A helical transmembrane segment spans residues 72 to 89 (AGLIAWGYSAVRGLQLSI). The Periplasmic segment spans residues 90 to 144 (EHVGYQFNPSPFATCDLFVQFPNWAPLNKWVPWMFEAYGNCAEVVWTFLGQSMPQ). Cys-104 and Cys-130 are joined by a disulfide. A helical transmembrane segment spans residues 145-163 (WLVIIFAGNLVALALIVIA). At 164 to 176 (QFFSKKTNTILDM) the chain is on the cytoplasmic side.

The protein belongs to the DsbB family.

It is found in the cell inner membrane. In terms of biological role, required for disulfide bond formation in some periplasmic proteins. Acts by oxidizing the DsbA protein. This Photobacterium profundum (strain SS9) protein is Disulfide bond formation protein B.